A 311-amino-acid polypeptide reads, in one-letter code: Formimidoylglutamase (311 aa).

Mn(2+)-binding residues include His-130, Asp-155, His-157, Asp-159, Cys-242, and Asp-244.

Belongs to the arginase family. Mn(2+) is required as a cofactor.

It carries out the reaction N-formimidoyl-L-glutamate + H2O = formamide + L-glutamate. It participates in amino-acid degradation; L-histidine degradation into L-glutamate; L-glutamate from N-formimidoyl-L-glutamate (hydrolase route): step 1/1. In terms of biological role, catalyzes the conversion of N-formimidoyl-L-glutamate to L-glutamate and formamide. This Staphylococcus aureus (strain MSSA476) protein is Formimidoylglutamase.